The following is an 89-amino-acid chain: Large ribosomal subunit protein eL34 (89 aa).

It belongs to the eukaryotic ribosomal protein eL34 family.

In Methanocaldococcus jannaschii (strain ATCC 43067 / DSM 2661 / JAL-1 / JCM 10045 / NBRC 100440) (Methanococcus jannaschii), this protein is Large ribosomal subunit protein eL34 (rpl34e).